The sequence spans 106 residues: Iron-sulfur cluster assembly protein CyaY (106 aa).

Belongs to the frataxin family.

In terms of biological role, involved in iron-sulfur (Fe-S) cluster assembly. May act as a regulator of Fe-S biogenesis. This chain is Iron-sulfur cluster assembly protein CyaY, found in Citrobacter koseri (strain ATCC BAA-895 / CDC 4225-83 / SGSC4696).